The primary structure comprises 61 residues: Metallothionein-2 (61 aa).

Met-1 bears the N-acetylmethionine mark. The beta stretch occupies residues 1–29 (MDPNCSCAAGDSCTCAGSCKCKECKCTSC). The a divalent metal cation site is built by Cys-5, Cys-7, Cys-13, Cys-15, Cys-19, Cys-21, Cys-24, Cys-26, Cys-29, Cys-33, Cys-34, Cys-36, Cys-37, Cys-41, Cys-44, Cys-48, Cys-50, and Cys-57. Residues 30–61 (KKSCCSCCPVGCAKCAQGCICKGASDKCSCCA) are alpha. Ser-58 is subject to Phosphoserine. Residues Cys-59 and Cys-60 each contribute to the a divalent metal cation site.

It belongs to the metallothionein superfamily. Type 1 family. Interacts with EOLA1.

Metallothioneins have a high content of cysteine residues that bind various heavy metals; these proteins are transcriptionally regulated by both heavy metals and glucocorticoids. The chain is Metallothionein-2 from Homo sapiens (Human).